Here is a 461-residue protein sequence, read N- to C-terminus: Cysteine--tRNA ligase (461 aa).

C28 contributes to the Zn(2+) binding site. Residues 30 to 40 (ITVYDLCHIGH) carry the 'HIGH' region motif. Residues C209, H234, and E238 each coordinate Zn(2+). A 'KMSKS' region motif is present at residues 266–270 (KMSKS). Residue K269 coordinates ATP.

The protein belongs to the class-I aminoacyl-tRNA synthetase family. As to quaternary structure, monomer. The cofactor is Zn(2+).

The protein resides in the cytoplasm. It carries out the reaction tRNA(Cys) + L-cysteine + ATP = L-cysteinyl-tRNA(Cys) + AMP + diphosphate. The sequence is that of Cysteine--tRNA ligase from Escherichia coli O17:K52:H18 (strain UMN026 / ExPEC).